The chain runs to 206 residues: Ras-related protein RABH1a (206 aa).

A GTP-binding site is contributed by G14 to T21. The Effector region signature appears at Y36–F44. Residues D62–Q66, N120–D123, and S150–A151 contribute to the GTP site. S-geranylgeranyl cysteine attachment occurs at residues C204 and C206. C206 bears the Cysteine methyl ester mark.

Belongs to the small GTPase superfamily. Rab family.

It is found in the golgi apparatus membrane. In terms of biological role, protein transport. Regulator of membrane traffic from the Golgi apparatus towards the endoplasmic reticulum (ER). The chain is Ras-related protein RABH1a (RABH1A) from Arabidopsis thaliana (Mouse-ear cress).